The sequence spans 403 residues: S-adenosylmethionine synthase (403 aa).

Residue His-16 participates in ATP binding. Residue Asp-18 coordinates Mg(2+). K(+) is bound at residue Glu-44. L-methionine is bound by residues Glu-57 and Gln-100. A flexible loop region spans residues 100–110 (QSPDIAQGVDR). A disordered region spans residues 106 to 126 (QGVDRSYESRSGSASTDAHDL). ATP-binding positions include 176-178 (DGK), 248-249 (KF), Asp-257, 263-264 (RK), Ala-280, and Lys-284. Asp-257 provides a ligand contact to L-methionine. An L-methionine-binding site is contributed by Lys-288.

This sequence belongs to the AdoMet synthase family. Homotetramer; dimer of dimers. The cofactor is Mg(2+). K(+) serves as cofactor.

Its subcellular location is the cytoplasm. The enzyme catalyses L-methionine + ATP + H2O = S-adenosyl-L-methionine + phosphate + diphosphate. It participates in amino-acid biosynthesis; S-adenosyl-L-methionine biosynthesis; S-adenosyl-L-methionine from L-methionine: step 1/1. Its function is as follows. Catalyzes the formation of S-adenosylmethionine (AdoMet) from methionine and ATP. The overall synthetic reaction is composed of two sequential steps, AdoMet formation and the subsequent tripolyphosphate hydrolysis which occurs prior to release of AdoMet from the enzyme. This is S-adenosylmethionine synthase from Clavibacter sepedonicus (Clavibacter michiganensis subsp. sepedonicus).